Here is a 112-residue protein sequence, read N- to C-terminus: MASYRKQRIENDIIRLINRTIINEIYDPVVKLGHVSHVKLSADFFHAVVYLDCYDRSQIQTVVNAFKKAQGVFSQMLAQNLYLAKSVKLHFVKDDAIDNALKIEQIINSLKN.

Belongs to the RbfA family. As to quaternary structure, monomer. Binds 30S ribosomal subunits, but not 50S ribosomal subunits or 70S ribosomes.

The protein localises to the cytoplasm. One of several proteins that assist in the late maturation steps of the functional core of the 30S ribosomal subunit. Associates with free 30S ribosomal subunits (but not with 30S subunits that are part of 70S ribosomes or polysomes). Required for efficient processing of 16S rRNA. May interact with the 5'-terminal helix region of 16S rRNA. This Mycoplasma genitalium (strain ATCC 33530 / DSM 19775 / NCTC 10195 / G37) (Mycoplasmoides genitalium) protein is Ribosome-binding factor A.